The sequence spans 380 residues: Cytochrome b (380 aa).

4 helical membrane passes run 34–54 (FGSL…FLAM), 78–99 (WLLR…YMHI), 114–134 (WNIG…GYVL), and 179–199 (FFAF…VHLL). Residues His84 and His98 each coordinate heme b. Heme b contacts are provided by His183 and His197. A ubiquinone is bound at residue His202. Transmembrane regions (helical) follow at residues 227-247 (YKDV…ALFS), 289-309 (LGGV…PFVH), 321-341 (LAQV…WLGG), and 348-368 (YIFL…LLIP).

It belongs to the cytochrome b family. As to quaternary structure, the cytochrome bc1 complex contains 3 respiratory subunits (MT-CYB, CYC1 and UQCRFS1), 2 core proteins (UQCRC1 and UQCRC2) and probably 6 low-molecular weight proteins. It depends on heme b as a cofactor.

Its subcellular location is the mitochondrion inner membrane. In terms of biological role, component of the ubiquinol-cytochrome c reductase complex (complex III or cytochrome b-c1 complex) that is part of the mitochondrial respiratory chain. The b-c1 complex mediates electron transfer from ubiquinol to cytochrome c. Contributes to the generation of a proton gradient across the mitochondrial membrane that is then used for ATP synthesis. The chain is Cytochrome b (MT-CYB) from Branchiostoma floridae (Florida lancelet).